The sequence spans 238 residues: Orotidine 5'-phosphate decarboxylase (238 aa).

Residues aspartate 10, lysine 32, 59–68, threonine 122, arginine 184, glutamine 193, glycine 213, and arginine 214 contribute to the substrate site; that span reads DLKLHDIPNT. The active-site Proton donor is the lysine 61.

The protein belongs to the OMP decarboxylase family. Type 1 subfamily. As to quaternary structure, homodimer.

It carries out the reaction orotidine 5'-phosphate + H(+) = UMP + CO2. Its pathway is pyrimidine metabolism; UMP biosynthesis via de novo pathway; UMP from orotate: step 2/2. In terms of biological role, catalyzes the decarboxylation of orotidine 5'-monophosphate (OMP) to uridine 5'-monophosphate (UMP). The polypeptide is Orotidine 5'-phosphate decarboxylase (Bacillus cereus (strain AH187)).